A 62-amino-acid chain; its full sequence is Amolopin-p-MT1 (62 aa).

An N-terminal signal peptide occupies residues 1–22 (MFTLKKSLLLLFFLGTISLSLC). The propeptide at 23–42 (EQERGADEEENGGEVTEEEV) is removed in mature form.

The protein belongs to the frog skin active peptide (FSAP) family. Brevinin subfamily. In terms of tissue distribution, expressed by the skin glands.

The protein localises to the secreted. Its function is as follows. Antimicrobial peptide. Active against a variety of Gram-negative and Gram-positive bacterial strains. Not active against fungi. Shows weak hemolytic activity against human erythrocytes. The sequence is that of Amolopin-p-MT1 from Amolops mantzorum (Sichuan torrent frog).